A 461-amino-acid chain; its full sequence is Tumor necrosis factor receptor superfamily member 1A (461 aa).

A signal peptide spans 1-29 (MGLPIVPGLLLSLVLLALLMGIHPSGVTG). At 30–211 (LVPSLGDREK…VTNPQDSGTA (182 aa)) the chain is on the extracellular side. TNFR-Cys repeat units follow at residues 43–82 (LCPQ…TVCE), 83–125 (VCDK…DTVC), 126–166 (GCKK…NTVC), and 167–196 (NCHA…KLCL). 12 cysteine pairs are disulfide-bonded: cysteine 44–cysteine 58, cysteine 59–cysteine 72, cysteine 62–cysteine 81, cysteine 84–cysteine 99, cysteine 102–cysteine 117, cysteine 105–cysteine 125, cysteine 127–cysteine 143, cysteine 146–cysteine 158, cysteine 149–cysteine 166, cysteine 168–cysteine 179, cysteine 182–cysteine 195, and cysteine 185–cysteine 191. A glycan (N-linked (GlcNAc...) asparagine) is linked at asparagine 54. A glycan (N-linked (GlcNAc...) asparagine) is linked at asparagine 151. N-linked (GlcNAc...) asparagine glycosylation occurs at asparagine 201. Residues 212–234 (VLLPLVIFLGLCLLFFICISLLC) traverse the membrane as a helical segment. Residues 235 to 461 (RYPQWRPRVY…AHSSTTHLPR (227 aa)) are Cytoplasmic-facing. The tract at residues 344-354 (VRKWEDVVAAQ) is N-SMase activation domain (NSD). Residues 363–448 (PAMLYAVVDG…GCLENIRETL (86 aa)) enclose the Death domain.

As to quaternary structure, binding of TNF to the extracellular domain leads to homotrimerization. The aggregated death domains provide a novel molecular interface that interacts specifically with the death domain of TRADD. Various TRADD-interacting proteins such as TRAFS, RIPK1 and possibly FADD, are recruited to the complex by their association with TRADD. This complex activates at least two distinct signaling cascades, apoptosis and NF-kappa-B signaling. Interacts with BAG4, BABAM2, FEM1B, GRB2, SQSTM1 and TRPC4AP. Interacts with DAB2IP. Interacts directly with NOL3 (via CARD domain); inhibits TNF-signaling pathway. Interacts with SH3RF2, TRADD and RIPK1. SH3RF2 facilitates the recruitment of RIPK1 and TRADD to TNFRSF1A in a TNF-alpha-dependent process. Interacts with PGLYRP1; this interaction is important for cell death induction. Interacts (via death domain) with MADD (via death domain).

The protein localises to the cell membrane. Its subcellular location is the golgi apparatus membrane. In terms of biological role, receptor for TNFSF2/TNF-alpha and homotrimeric TNFSF1/lymphotoxin-alpha. The adapter molecule FADD recruits caspase-8 to the activated receptor. The resulting death-inducing signaling complex (DISC) performs caspase-8 proteolytic activation which initiates the subsequent cascade of caspases (aspartate-specific cysteine proteases) mediating apoptosis. The protein is Tumor necrosis factor receptor superfamily member 1A (Tnfrsf1a) of Rattus norvegicus (Rat).